Reading from the N-terminus, the 265-residue chain is Hemin import ATP-binding protein HmuV (265 aa).

An ABC transporter domain is found at L13–P249. G45–S52 is a binding site for ATP.

Belongs to the ABC transporter superfamily. Heme (hemin) importer (TC 3.A.1.14.5) family. As to quaternary structure, the complex is composed of two ATP-binding proteins (HmuV), two transmembrane proteins (HmuU) and a solute-binding protein (HmuT).

The protein localises to the cell inner membrane. Part of the ABC transporter complex HmuTUV involved in hemin import. Responsible for energy coupling to the transport system. This Photobacterium damsela subsp. piscicida (Pasteurella piscicida) protein is Hemin import ATP-binding protein HmuV.